The chain runs to 138 residues: ATP synthase epsilon chain (138 aa).

This sequence belongs to the ATPase epsilon chain family. As to quaternary structure, F-type ATPases have 2 components, CF(1) - the catalytic core - and CF(0) - the membrane proton channel. CF(1) has five subunits: alpha(3), beta(3), gamma(1), delta(1), epsilon(1). CF(0) has three main subunits: a, b and c.

It is found in the cell inner membrane. Produces ATP from ADP in the presence of a proton gradient across the membrane. In Citrifermentans bemidjiense (strain ATCC BAA-1014 / DSM 16622 / JCM 12645 / Bem) (Geobacter bemidjiensis), this protein is ATP synthase epsilon chain.